Reading from the N-terminus, the 267-residue chain is Hydroxyethylthiazole kinase 2 (267 aa).

M41 is a substrate binding site. The ATP site is built by K116 and T166. Residue G193 participates in substrate binding.

It belongs to the Thz kinase family. It depends on Mg(2+) as a cofactor.

It catalyses the reaction 5-(2-hydroxyethyl)-4-methylthiazole + ATP = 4-methyl-5-(2-phosphooxyethyl)-thiazole + ADP + H(+). It functions in the pathway cofactor biosynthesis; thiamine diphosphate biosynthesis; 4-methyl-5-(2-phosphoethyl)-thiazole from 5-(2-hydroxyethyl)-4-methylthiazole: step 1/1. In terms of biological role, catalyzes the phosphorylation of the hydroxyl group of 4-methyl-5-beta-hydroxyethylthiazole (THZ). The protein is Hydroxyethylthiazole kinase 2 of Streptococcus pneumoniae (strain 70585).